The sequence spans 97 residues: Large ribosomal subunit protein uL23 (97 aa).

The protein belongs to the universal ribosomal protein uL23 family. Part of the 50S ribosomal subunit. Contacts protein L29, and trigger factor when it is bound to the ribosome.

One of the early assembly proteins it binds 23S rRNA. One of the proteins that surrounds the polypeptide exit tunnel on the outside of the ribosome. Forms the main docking site for trigger factor binding to the ribosome. The chain is Large ribosomal subunit protein uL23 from Lactiplantibacillus plantarum (strain ATCC BAA-793 / NCIMB 8826 / WCFS1) (Lactobacillus plantarum).